A 393-amino-acid polypeptide reads, in one-letter code: Branched-chain-amino-acid aminotransferase, mitochondrial (393 aa).

The transit peptide at 1–27 (MAAATLGQVWARKLLPVPWLLCGSKRC) directs the protein to the mitochondrion. Tyrosine 169 contacts substrate. Lysine 230 bears the N6-(pyridoxal phosphate)lysine mark. Residue lysine 322 is modified to N6-acetyllysine.

It belongs to the class-IV pyridoxal-phosphate-dependent aminotransferase family. In terms of assembly, homodimer. The cofactor is pyridoxal 5'-phosphate.

It localises to the mitochondrion. The enzyme catalyses L-leucine + 2-oxoglutarate = 4-methyl-2-oxopentanoate + L-glutamate. The catalysed reaction is L-isoleucine + 2-oxoglutarate = (S)-3-methyl-2-oxopentanoate + L-glutamate. It carries out the reaction L-valine + 2-oxoglutarate = 3-methyl-2-oxobutanoate + L-glutamate. Its function is as follows. Catalyzes the first reaction in the catabolism of the essential branched chain amino acids leucine, isoleucine, and valine. May also function as a transporter of branched chain alpha-keto acids. The protein is Branched-chain-amino-acid aminotransferase, mitochondrial (Bcat2) of Mus musculus (Mouse).